The primary structure comprises 364 residues: Aminomethyltransferase (364 aa).

This sequence belongs to the GcvT family. The glycine cleavage system is composed of four proteins: P, T, L and H.

It catalyses the reaction N(6)-[(R)-S(8)-aminomethyldihydrolipoyl]-L-lysyl-[protein] + (6S)-5,6,7,8-tetrahydrofolate = N(6)-[(R)-dihydrolipoyl]-L-lysyl-[protein] + (6R)-5,10-methylene-5,6,7,8-tetrahydrofolate + NH4(+). Its function is as follows. The glycine cleavage system catalyzes the degradation of glycine. This chain is Aminomethyltransferase, found in Shewanella pealeana (strain ATCC 700345 / ANG-SQ1).